Reading from the N-terminus, the 444-residue chain is MGKLFGTDGVRGVANQGLPPELAFRLGRAGAAVLAGKGDRVRVVVGRDTRISGDMLEAALVAGICSVGGQVLKVGIIPTPAVAWLTRDLGADAGVVISASHNPVADNGIKFFSASGYKLPDPVEEEIERLVLAPEDNLPRPVGVDLGRVKEVTEAPERYIAHVCSTAGRGLAGMQVVLDCANGAACRVAPAIFQRLGAEVSLLHNVPDGTNINVRCGSTHPESLQAEVVARGAAVGLAFDGDADRVIAVDEKGQVVDGDVIMTILALYRQEQGGLPGGQVVVTVMSNYGLHQALTAAGLRVQQTRVGDRYVLEEMLKSGAVLGGEQSGHIILLEHNTTGDGLITGVQLLQVMAATGRPLSELAAAMPRLPQILVNVRVGDKDAAMASPALQAAVAAAREQLAGRGRVLVRPSGTEPIIRLMVEGPDREELENIMAGLQRVASGL.

Residue serine 100 is the Phosphoserine intermediate of the active site. Residues serine 100, aspartate 240, aspartate 242, and aspartate 244 each coordinate Mg(2+). A Phosphoserine modification is found at serine 100.

The protein belongs to the phosphohexose mutase family. The cofactor is Mg(2+). Post-translationally, activated by phosphorylation.

The enzyme catalyses alpha-D-glucosamine 1-phosphate = D-glucosamine 6-phosphate. Catalyzes the conversion of glucosamine-6-phosphate to glucosamine-1-phosphate. In Moorella thermoacetica (strain ATCC 39073 / JCM 9320), this protein is Phosphoglucosamine mutase.